The following is a 369-amino-acid chain: MTSVTLRNVCKAYGDNLISKNVDLEIAEGEFVVFVGPSGCGKSTLLRCIAGLEDITSGDLYFGKERMNDVPPSDRGVGMVFQSYALYPHLNLFDNMSFGMKLAKADKSEIKKRVNNAADILQLGHLLERQPKSLSGGQRQRVAIGRTIVSQPNVFLLDEPLSNLDAALRVQMRIEIAKLHKQLGCTMIYVTHDQVEAMTMAEKIVVLDGGYVSQVGKPLELYHYPQNRFVAGFIGSPKMNFMSVFIEQVEDERVMVQTADGKAFWIPVDGTTVTKGDRMSLGIRPEHLVSAEEGDTSIEGTVQVVEKLGYETQVYIHLDHVDADFIYRRPDTLQVEAGDSFKVGIPAHRCHLFHSDGRACRRLYQEAGI.

The region spanning Val4–Ile234 is the ABC transporter domain. Gly36–Ser43 serves as a coordination point for ATP.

It belongs to the ABC transporter superfamily. Maltooligosaccharide importer (TC 3.A.1.1.1) family. In terms of assembly, the complex is composed of two ATP-binding proteins (MalK), two transmembrane proteins (MalG and MalK) and a solute-binding protein (MalE).

Its subcellular location is the cell inner membrane. It catalyses the reaction D-maltose(out) + ATP + H2O = D-maltose(in) + ADP + phosphate + H(+). Functionally, part of the ABC transporter complex MalEFGK involved in maltose/maltodextrin import. Responsible for energy coupling to the transport system. In Photobacterium profundum (strain SS9), this protein is Maltose/maltodextrin import ATP-binding protein MalK.